We begin with the raw amino-acid sequence, 413 residues long: Serine hydroxymethyltransferase (413 aa).

(6S)-5,6,7,8-tetrahydrofolate contacts are provided by residues L119 and 123 to 125; that span reads GHL. K228 is modified (N6-(pyridoxal phosphate)lysine). 351-353 lines the (6S)-5,6,7,8-tetrahydrofolate pocket; sequence SPF.

Belongs to the SHMT family. Homodimer. The cofactor is pyridoxal 5'-phosphate.

The protein localises to the cytoplasm. It carries out the reaction (6R)-5,10-methylene-5,6,7,8-tetrahydrofolate + glycine + H2O = (6S)-5,6,7,8-tetrahydrofolate + L-serine. The protein operates within one-carbon metabolism; tetrahydrofolate interconversion. It participates in amino-acid biosynthesis; glycine biosynthesis; glycine from L-serine: step 1/1. Functionally, catalyzes the reversible interconversion of serine and glycine with tetrahydrofolate (THF) serving as the one-carbon carrier. This reaction serves as the major source of one-carbon groups required for the biosynthesis of purines, thymidylate, methionine, and other important biomolecules. Also exhibits THF-independent aldolase activity toward beta-hydroxyamino acids, producing glycine and aldehydes, via a retro-aldol mechanism. The protein is Serine hydroxymethyltransferase of Clostridium botulinum (strain ATCC 19397 / Type A).